The primary structure comprises 476 residues: Bifunctional protein GlmU (476 aa).

Residues 1-235 (MTALDIIIMA…ALQVAGVNSP (235 aa)) are pyrophosphorylase. UDP-N-acetyl-alpha-D-glucosamine-binding positions include Lys23, Gln81, 86 to 87 (GT), 108 to 110 (SGD), Gly145, Glu160, and Asn233. A Mg(2+)-binding site is contributed by Asp110. Asn233 provides a ligand contact to Mg(2+). The segment at 236–256 (AQLAELERAHQRAQAAALMEQ) is linker. The segment at 257–476 (GVRLADPARF…WKRPAKQAKG (220 aa)) is N-acetyltransferase. 2 residues coordinate UDP-N-acetyl-alpha-D-glucosamine: Arg351 and Lys369. His381 serves as the catalytic Proton acceptor. UDP-N-acetyl-alpha-D-glucosamine-binding residues include Tyr384 and Asn395. Residues Ala398, 404–405 (NY), Ser423, Gly441, and Arg458 each bind acetyl-CoA.

In the N-terminal section; belongs to the N-acetylglucosamine-1-phosphate uridyltransferase family. It in the C-terminal section; belongs to the transferase hexapeptide repeat family. In terms of assembly, homotrimer. Mg(2+) is required as a cofactor.

It localises to the cytoplasm. It catalyses the reaction alpha-D-glucosamine 1-phosphate + acetyl-CoA = N-acetyl-alpha-D-glucosamine 1-phosphate + CoA + H(+). It carries out the reaction N-acetyl-alpha-D-glucosamine 1-phosphate + UTP + H(+) = UDP-N-acetyl-alpha-D-glucosamine + diphosphate. Its pathway is nucleotide-sugar biosynthesis; UDP-N-acetyl-alpha-D-glucosamine biosynthesis; N-acetyl-alpha-D-glucosamine 1-phosphate from alpha-D-glucosamine 6-phosphate (route II): step 2/2. It functions in the pathway nucleotide-sugar biosynthesis; UDP-N-acetyl-alpha-D-glucosamine biosynthesis; UDP-N-acetyl-alpha-D-glucosamine from N-acetyl-alpha-D-glucosamine 1-phosphate: step 1/1. It participates in bacterial outer membrane biogenesis; LPS lipid A biosynthesis. Catalyzes the last two sequential reactions in the de novo biosynthetic pathway for UDP-N-acetylglucosamine (UDP-GlcNAc). The C-terminal domain catalyzes the transfer of acetyl group from acetyl coenzyme A to glucosamine-1-phosphate (GlcN-1-P) to produce N-acetylglucosamine-1-phosphate (GlcNAc-1-P), which is converted into UDP-GlcNAc by the transfer of uridine 5-monophosphate (from uridine 5-triphosphate), a reaction catalyzed by the N-terminal domain. This chain is Bifunctional protein GlmU, found in Acidovorax ebreus (strain TPSY) (Diaphorobacter sp. (strain TPSY)).